The following is a 156-amino-acid chain: 6,7-dimethyl-8-ribityllumazine synthase (156 aa).

5-amino-6-(D-ribitylamino)uracil is bound by residues phenylalanine 22, 57 to 59 (AYE), and 81 to 83 (TVI). 86–87 (GT) is a binding site for (2S)-2-hydroxy-3-oxobutyl phosphate. Histidine 89 (proton donor) is an active-site residue. Residue phenylalanine 114 coordinates 5-amino-6-(D-ribitylamino)uracil. Arginine 128 contributes to the (2S)-2-hydroxy-3-oxobutyl phosphate binding site.

Belongs to the DMRL synthase family. In terms of assembly, forms an icosahedral capsid composed of 60 subunits, arranged as a dodecamer of pentamers.

It carries out the reaction (2S)-2-hydroxy-3-oxobutyl phosphate + 5-amino-6-(D-ribitylamino)uracil = 6,7-dimethyl-8-(1-D-ribityl)lumazine + phosphate + 2 H2O + H(+). The protein operates within cofactor biosynthesis; riboflavin biosynthesis; riboflavin from 2-hydroxy-3-oxobutyl phosphate and 5-amino-6-(D-ribitylamino)uracil: step 1/2. Functionally, catalyzes the formation of 6,7-dimethyl-8-ribityllumazine by condensation of 5-amino-6-(D-ribitylamino)uracil with 3,4-dihydroxy-2-butanone 4-phosphate. This is the penultimate step in the biosynthesis of riboflavin. This is 6,7-dimethyl-8-ribityllumazine synthase from Erwinia tasmaniensis (strain DSM 17950 / CFBP 7177 / CIP 109463 / NCPPB 4357 / Et1/99).